The following is a 1111-amino-acid chain: Serine/threonine-protein kinase Nek10 (1111 aa).

A compositionally biased stretch (basic and acidic residues) spans 1–16 (MPDQDTKAKSTEKTAD). Disordered regions lie at residues 1 to 24 (MPDQ…TTTR) and 47 to 72 (AINF…HRAR). Polar residues predominate over residues 47–63 (AINFDSAQNNMTKSEPT). Residues 481–514 (YKDLVSQLNLLLEDELKQIAENIESINQKKAPLK) adopt a coiled-coil conformation. The Protein kinase domain maps to 519–791 (YAVLDHLGSG…MISDVMMKYL (273 aa)). ATP contacts are provided by residues 525 to 533 (LGSGAFGCV) and K548. D655 serves as the catalytic Proton acceptor.

This sequence belongs to the protein kinase superfamily. NEK Ser/Thr protein kinase family. NIMA subfamily. Interacts with RAF1 and MAP2K1; the interaction is direct with RAF1 and required for ERK1/2-signaling pathway activation in response to UV irradiation. The cofactor is Mg(2+). As to expression, expressed in the mammary gland, lung, spleen, and kidney.

The catalysed reaction is L-seryl-[protein] + ATP = O-phospho-L-seryl-[protein] + ADP + H(+). It catalyses the reaction L-threonyl-[protein] + ATP = O-phospho-L-threonyl-[protein] + ADP + H(+). Functionally, plays a role in the cellular response to UV irradiation. Mediates G2/M cell cycle arrest, MEK autoactivation and ERK1/2-signaling pathway activation in response to UV irradiation. In ciliated cells, it is involved in the regulation of mucociliary transport. This chain is Serine/threonine-protein kinase Nek10, found in Mus musculus (Mouse).